The chain runs to 1252 residues: Guanine nucleotide exchange factor SDC25 (1252 aa).

The 72-residue stretch at Gln26–Asn97 folds into the SH3 domain. Disordered regions lie at residues Ile409 to Trp454 and Leu623 to Glu648. Residues Thr416–Ser428 show a composition bias toward low complexity. The region spanning Ser782–Lys914 is the N-terminal Ras-GEF domain. The Ras-GEF domain occupies Asp952–Lys1199. The segment at Arg1201–Lys1252 is disordered. Over residues Ser1214 to Ser1236 the composition is skewed to basic and acidic residues. A compositionally biased stretch (basic residues) spans Gln1239 to Lys1252.

Promotes the exchange of Ras-bound GDP by GTP. This is Guanine nucleotide exchange factor SDC25 (SDC25) from Saccharomyces cerevisiae (strain RM11-1a) (Baker's yeast).